We begin with the raw amino-acid sequence, 267 residues long: Thiamine thiazole synthase (267 aa).

NAD(+) contacts are provided by residues S41, 60 to 61, G68, V132, and 160 to 162; these read ER and HVD. The Fe cation site is built by D162 and H177. M227 serves as a coordination point for NAD(+). Glycine is bound at residue R237.

The protein belongs to the THI4 family. Homooctamer; tetramer of dimers. It depends on Fe(2+) as a cofactor.

It carries out the reaction hydrogen sulfide + glycine + NAD(+) = ADP-5-ethyl-4-methylthiazole-2-carboxylate + nicotinamide + 3 H2O + H(+). Its pathway is cofactor biosynthesis; thiamine diphosphate biosynthesis. Involved in the biosynthesis of the thiazole moiety of thiamine. Catalyzes the conversion of NAD and glycine to adenosine diphosphate 5-(2-hydroxyethyl)-4-methylthiazole-2-carboxylate (ADT), an adenylated thiazole intermediate, using free sulfide as a source of sulfur. In Saccharolobus islandicus (strain Y.N.15.51 / Yellowstone #2) (Sulfolobus islandicus), this protein is Thiamine thiazole synthase.